The chain runs to 492 residues: MRDAAVVILAAGAGTRMKSDTPKVLHTLAGRSMLSHALHAVAGLEARHLVVVVGKDRERVAPAALEIGQTLGRDVDIAIQDQQRGTGHAVECGLTALPADFTGTVVVTAGDVPLLDTHTLSDLIAAHDAESAAATLLTTTLADPTGYGRILRTQDGGVIGIVEQADATPSQRAITEVNAAVYAFDAGALRSALSRLQADNAQGELYLTDVIAIARSDGGVVRARHIDDAALVAGVNDRVQLADLAAVLNRRIVEGHQRAGVTIIDPASTWIDVDVTIGRDTVVRPGTQLLGATTIGGRAEIGPDTTLADVTVGDGAAVIRTHGTSAVIGDDSVVGPFTYLRPGTELGAAGKLGAFVETKNATIGTGTKVPHLTYVGDADIGEHSNIGASSVFVNYDGETKSRTTIGSHVRTGSDTMFVAPVTVGDGAYTGAGTVVREDVPPGALAVSAGPQRNIEGWVTRKRPGSAAAEAAAAAGAGAGAAAEDQGPEATGE.

Positions 1–238 (MRDAAVVILA…AALVAGVNDR (238 aa)) are pyrophosphorylase. UDP-N-acetyl-alpha-D-glucosamine is bound by residues 9–12 (LAAG), Lys23, Gln80, and 85–86 (GT). Mg(2+) is bound at residue Asp111. The UDP-N-acetyl-alpha-D-glucosamine site is built by Gly148, Glu163, Asn178, and Asn236. Position 236 (Asn236) interacts with Mg(2+). The tract at residues 239-259 (VQLADLAAVLNRRIVEGHQRA) is linker. Residues 260-492 (GVTIIDPAST…EDQGPEATGE (233 aa)) form an N-acetyltransferase region. Arg341 and Lys359 together coordinate UDP-N-acetyl-alpha-D-glucosamine. Residue His371 is the Proton acceptor of the active site. 2 residues coordinate UDP-N-acetyl-alpha-D-glucosamine: Tyr374 and Asn385. Residues Ala388, 394–395 (NY), Ser413, and Ala431 contribute to the acetyl-CoA site. The span at 469–483 (EAAAAAGAGAGAAAE) shows a compositional bias: low complexity. The disordered stretch occupies residues 469 to 492 (EAAAAAGAGAGAAAEDQGPEATGE).

The protein in the N-terminal section; belongs to the N-acetylglucosamine-1-phosphate uridyltransferase family. In the C-terminal section; belongs to the transferase hexapeptide repeat family. As to quaternary structure, homotrimer. It depends on Mg(2+) as a cofactor.

Its subcellular location is the cytoplasm. It catalyses the reaction alpha-D-glucosamine 1-phosphate + acetyl-CoA = N-acetyl-alpha-D-glucosamine 1-phosphate + CoA + H(+). The catalysed reaction is N-acetyl-alpha-D-glucosamine 1-phosphate + UTP + H(+) = UDP-N-acetyl-alpha-D-glucosamine + diphosphate. The protein operates within nucleotide-sugar biosynthesis; UDP-N-acetyl-alpha-D-glucosamine biosynthesis; N-acetyl-alpha-D-glucosamine 1-phosphate from alpha-D-glucosamine 6-phosphate (route II): step 2/2. It participates in nucleotide-sugar biosynthesis; UDP-N-acetyl-alpha-D-glucosamine biosynthesis; UDP-N-acetyl-alpha-D-glucosamine from N-acetyl-alpha-D-glucosamine 1-phosphate: step 1/1. Its pathway is bacterial outer membrane biogenesis; LPS lipid A biosynthesis. Functionally, catalyzes the last two sequential reactions in the de novo biosynthetic pathway for UDP-N-acetylglucosamine (UDP-GlcNAc). The C-terminal domain catalyzes the transfer of acetyl group from acetyl coenzyme A to glucosamine-1-phosphate (GlcN-1-P) to produce N-acetylglucosamine-1-phosphate (GlcNAc-1-P), which is converted into UDP-GlcNAc by the transfer of uridine 5-monophosphate (from uridine 5-triphosphate), a reaction catalyzed by the N-terminal domain. The polypeptide is Bifunctional protein GlmU (Mycolicibacterium vanbaalenii (strain DSM 7251 / JCM 13017 / BCRC 16820 / KCTC 9966 / NRRL B-24157 / PYR-1) (Mycobacterium vanbaalenii)).